The primary structure comprises 276 residues: 3-methyl-2-oxobutanoate hydroxymethyltransferase (276 aa).

The Mg(2+) site is built by Asp-50 and Asp-89. Residues 50-51 (DS), Asp-89, and Lys-119 contribute to the 3-methyl-2-oxobutanoate site. A Mg(2+)-binding site is contributed by Glu-121. Glu-188 serves as the catalytic Proton acceptor.

This sequence belongs to the PanB family. In terms of assembly, homodecamer; pentamer of dimers. Mg(2+) serves as cofactor.

It is found in the cytoplasm. It catalyses the reaction 3-methyl-2-oxobutanoate + (6R)-5,10-methylene-5,6,7,8-tetrahydrofolate + H2O = 2-dehydropantoate + (6S)-5,6,7,8-tetrahydrofolate. The protein operates within cofactor biosynthesis; (R)-pantothenate biosynthesis; (R)-pantoate from 3-methyl-2-oxobutanoate: step 1/2. In terms of biological role, catalyzes the reversible reaction in which hydroxymethyl group from 5,10-methylenetetrahydrofolate is transferred onto alpha-ketoisovalerate to form ketopantoate. This Paracoccus denitrificans (strain Pd 1222) protein is 3-methyl-2-oxobutanoate hydroxymethyltransferase.